Reading from the N-terminus, the 304-residue chain is Heme A synthase (304 aa).

Topologically, residues 1–8 (MFNKRNLK) are cytoplasmic. A helical membrane pass occupies residues 9–29 (WLSVLATIIMAFVQLGGALVT). The Extracellular segment spans residues 30–67 (KTGSEDGCGSSWPLCHGALLPQNLPIDTIIELSHRAVS). A disulfide bond links Cys-37 and Cys-44. Glu-60 is an active-site residue. Residue His-63 participates in heme o binding. A helical membrane pass occupies residues 68-88 (GLSLIVVLWLAITAWKHIGYI). Over 89–93 (REVKP) the chain is Cytoplasmic. A helical transmembrane segment spans residues 94-114 (LAIISIAFLLVQALIGAAAVI). Over 115–123 (WQQNSYVLA) the chain is Extracellular. A helical transmembrane segment spans residues 124–144 (LHFGISLISFSSVFVLMLIIF). Residue His-125 coordinates heme o. Topologically, residues 145–163 (EVDKKYEADELYIRKPLRR) are cytoplasmic. A helical transmembrane segment spans residues 164–184 (LTWIMTGIVYLTIYTGALVRH). Topologically, residues 185–215 (AKASLAYGGWPLPFHDIIPHTEQDWVQFAHR) are extracellular. His-214 is a binding site for heme b. Residues 216–236 (GMAFITFFWIMITFIHAVKNY) traverse the membrane as a helical segment. Residues 237–244 (SENRTIRY) are Cytoplasmic-facing. A helical transmembrane segment spans residues 245 to 265 (GYTTAFILIILQVITGALSVM). Residues 266 to 270 (TNVNL) lie on the Extracellular side of the membrane. Residues 271–291 (FIALLHALFITILFGMIAYFI) form a helical membrane-spanning segment. His-276 is a binding site for heme b. Residues 292–304 (MLMLRTIRSEKIK) are Cytoplasmic-facing.

This sequence belongs to the COX15/CtaA family. Type 1 subfamily. Interacts with CtaB. Heme b serves as cofactor.

The protein localises to the cell membrane. It carries out the reaction Fe(II)-heme o + 2 A + H2O = Fe(II)-heme a + 2 AH2. It participates in porphyrin-containing compound metabolism; heme A biosynthesis; heme A from heme O: step 1/1. Functionally, catalyzes the conversion of heme O to heme A by two successive hydroxylations of the methyl group at C8. The first hydroxylation forms heme I, the second hydroxylation results in an unstable dihydroxymethyl group, which spontaneously dehydrates, resulting in the formyl group of heme A. This is Heme A synthase from Staphylococcus haemolyticus (strain JCSC1435).